Here is a 325-residue protein sequence, read N- to C-terminus: Phosphatidylglycerol--prolipoprotein diacylglyceryl transferase (325 aa).

4 helical membrane-spanning segments follow: residues I19–G39, G47–G67, I93–I113, and G119–I139. R141 serves as a coordination point for a 1,2-diacyl-sn-glycero-3-phospho-(1'-sn-glycerol). 3 helical membrane-spanning segments follow: residues H175–A195, F207–R225, and L237–A257. Positions I266–T312 are enriched in basic and acidic residues. The tract at residues I266 to A325 is disordered. The segment covering A313–A325 has biased composition (low complexity).

The protein belongs to the Lgt family.

It localises to the cell membrane. It catalyses the reaction L-cysteinyl-[prolipoprotein] + a 1,2-diacyl-sn-glycero-3-phospho-(1'-sn-glycerol) = an S-1,2-diacyl-sn-glyceryl-L-cysteinyl-[prolipoprotein] + sn-glycerol 1-phosphate + H(+). Its pathway is protein modification; lipoprotein biosynthesis (diacylglyceryl transfer). Catalyzes the transfer of the diacylglyceryl group from phosphatidylglycerol to the sulfhydryl group of the N-terminal cysteine of a prolipoprotein, the first step in the formation of mature lipoproteins. This Streptomyces griseus subsp. griseus (strain JCM 4626 / CBS 651.72 / NBRC 13350 / KCC S-0626 / ISP 5235) protein is Phosphatidylglycerol--prolipoprotein diacylglyceryl transferase.